A 259-amino-acid polypeptide reads, in one-letter code: Type III pantothenate kinase (259 aa).

ATP is bound at residue Asp6 to Val13. Residues Tyr100 and Gly107–Arg110 each bind substrate. The active-site Proton acceptor is Asp109. K(+) is bound at residue Asp129. Thr132 provides a ligand contact to ATP. Thr184 contributes to the substrate binding site.

Belongs to the type III pantothenate kinase family. In terms of assembly, homodimer. NH4(+) serves as cofactor. Requires K(+) as cofactor.

It is found in the cytoplasm. It carries out the reaction (R)-pantothenate + ATP = (R)-4'-phosphopantothenate + ADP + H(+). It participates in cofactor biosynthesis; coenzyme A biosynthesis; CoA from (R)-pantothenate: step 1/5. Functionally, catalyzes the phosphorylation of pantothenate (Pan), the first step in CoA biosynthesis. This chain is Type III pantothenate kinase, found in Clostridium perfringens (strain ATCC 13124 / DSM 756 / JCM 1290 / NCIMB 6125 / NCTC 8237 / Type A).